The sequence spans 57 residues: Large ribosomal subunit protein bL32 (57 aa).

Residues 1–23 (MAVPKKRTSKTRTNRRRAQKKAR) form a disordered region.

It belongs to the bacterial ribosomal protein bL32 family.

This is Large ribosomal subunit protein bL32 from Natranaerobius thermophilus (strain ATCC BAA-1301 / DSM 18059 / JW/NM-WN-LF).